The primary structure comprises 271 residues: MRASASSAVTVVNAFATGVGSAIGIDLWTRAEVKLKGDGIEGEIRVRGEQVRDFRLVKAVADVFREKTGEEFGIKFRIESEIPIAMGLKSSSAAANALSKALADALGLDMSEMEVVKAGVEAAKRAGVTLTGAFDDACASYFGSLWVTDNLGMRVLHSSKVEPLPVVLLLPGKTLLTESLGGRDFSPIRPYVEEAVRLALEGEWRKAALINGLVYSTYLGHPIEPFRIALERGAVVGLSGKGPAVFAVTNEPEELAEEWEQFGKVLTTELR.

83 to 93 (PIAMGLKSSSA) contacts ATP.

This sequence belongs to the GHMP kinase family. Archaeal shikimate kinase subfamily.

Its subcellular location is the cytoplasm. The enzyme catalyses shikimate + ATP = 3-phosphoshikimate + ADP + H(+). Its pathway is metabolic intermediate biosynthesis; chorismate biosynthesis; chorismate from D-erythrose 4-phosphate and phosphoenolpyruvate: step 5/7. In Thermococcus kodakarensis (strain ATCC BAA-918 / JCM 12380 / KOD1) (Pyrococcus kodakaraensis (strain KOD1)), this protein is Shikimate kinase.